Consider the following 227-residue polypeptide: Cytochrome c oxidase subunit 2 (227 aa).

Topologically, residues 1–14 (MAHPVQLSLQDATS) are mitochondrial intermembrane. Residues 15 to 45 (PVMEELITFHDHAFMAMSLISFLVLYALLST) traverse the membrane as a helical segment. Residues 46-59 (LTTKLTNTSITDAQ) lie on the Mitochondrial matrix side of the membrane. Residues 60–87 (EMETIWTILPAIILILIALPSLRILYLT) form a helical membrane-spanning segment. Over 88–227 (DEVNDPSFTI…IFEMGPVLTL (140 aa)) the chain is Mitochondrial intermembrane. Residues histidine 161, cysteine 196, glutamate 198, cysteine 200, histidine 204, and methionine 207 each contribute to the Cu cation site. Glutamate 198 contacts Mg(2+).

Belongs to the cytochrome c oxidase subunit 2 family. As to quaternary structure, component of the cytochrome c oxidase (complex IV, CIV), a multisubunit enzyme composed of 14 subunits. The complex is composed of a catalytic core of 3 subunits MT-CO1, MT-CO2 and MT-CO3, encoded in the mitochondrial DNA, and 11 supernumerary subunits COX4I, COX5A, COX5B, COX6A, COX6B, COX6C, COX7A, COX7B, COX7C, COX8 and NDUFA4, which are encoded in the nuclear genome. The complex exists as a monomer or a dimer and forms supercomplexes (SCs) in the inner mitochondrial membrane with NADH-ubiquinone oxidoreductase (complex I, CI) and ubiquinol-cytochrome c oxidoreductase (cytochrome b-c1 complex, complex III, CIII), resulting in different assemblies (supercomplex SCI(1)III(2)IV(1) and megacomplex MCI(2)III(2)IV(2)). Found in a complex with TMEM177, COA6, COX18, COX20, SCO1 and SCO2. Interacts with TMEM177 in a COX20-dependent manner. Interacts with COX20. Interacts with COX16. It depends on Cu cation as a cofactor.

Its subcellular location is the mitochondrion inner membrane. The enzyme catalyses 4 Fe(II)-[cytochrome c] + O2 + 8 H(+)(in) = 4 Fe(III)-[cytochrome c] + 2 H2O + 4 H(+)(out). Functionally, component of the cytochrome c oxidase, the last enzyme in the mitochondrial electron transport chain which drives oxidative phosphorylation. The respiratory chain contains 3 multisubunit complexes succinate dehydrogenase (complex II, CII), ubiquinol-cytochrome c oxidoreductase (cytochrome b-c1 complex, complex III, CIII) and cytochrome c oxidase (complex IV, CIV), that cooperate to transfer electrons derived from NADH and succinate to molecular oxygen, creating an electrochemical gradient over the inner membrane that drives transmembrane transport and the ATP synthase. Cytochrome c oxidase is the component of the respiratory chain that catalyzes the reduction of oxygen to water. Electrons originating from reduced cytochrome c in the intermembrane space (IMS) are transferred via the dinuclear copper A center (CU(A)) of subunit 2 and heme A of subunit 1 to the active site in subunit 1, a binuclear center (BNC) formed by heme A3 and copper B (CU(B)). The BNC reduces molecular oxygen to 2 water molecules using 4 electrons from cytochrome c in the IMS and 4 protons from the mitochondrial matrix. In Macaca mulatta (Rhesus macaque), this protein is Cytochrome c oxidase subunit 2 (MT-CO2).